Reading from the N-terminus, the 101-residue chain is MSSSTSCPIPGCRDQLPDGYSTTPGGTLYATTPGGTRIIYDRKFLLECKNSPIARTPPCCLPQIPGVTTLPAVPPSKLELLKEQKQTEVEITDDEQFEMDM.

The disordered stretch occupies residues 1-28 (MSSSTSCPIPGCRDQLPDGYSTTPGGTL). Residues 40-46 (YDRKFLL) carry the YXXXXLphi motif motif. The TOS motif signature appears at 97–101 (FEMDM).

The protein belongs to the eIF4E-binding protein family. As to quaternary structure, interacts with EIF4E. Interacts with RPA2 (via N-terminus); the interaction enhances EIF4EBP3-mediated inhibition of EIF4E-mediated mRNA nuclear export. In terms of processing, phosphorylated.

The protein resides in the cytoplasm. It is found in the nucleus. Functionally, repressor of translation initiation that regulates EIF4E activity by preventing its assembly into the eIF4F complex: the hypophosphorylated form competes with EIF4G1/EIF4G3 and strongly binds to EIF4E, leading to repression of translation. In contrast, the hyperphosphorylated form dissociates from EIF4E, allowing interaction between EIF4G1/EIF4G3 and EIF4E, leading to initiation of translation. Inhibits EIF4E-mediated mRNA nuclear export. This chain is Eukaryotic translation initiation factor 4E-binding protein 3 (Eif4ebp3), found in Mus musculus (Mouse).